The sequence spans 378 residues: Phosphoserine aminotransferase (378 aa).

Position 53 (Arg53) interacts with L-glutamate. Residues Trp117, Thr167, Asp190, and Gln213 each coordinate pyridoxal 5'-phosphate. Residue Lys214 is modified to N6-(pyridoxal phosphate)lysine. 255–256 (NT) contacts pyridoxal 5'-phosphate.

It belongs to the class-V pyridoxal-phosphate-dependent aminotransferase family. SerC subfamily. Homodimer. Pyridoxal 5'-phosphate is required as a cofactor.

Its subcellular location is the cytoplasm. It carries out the reaction O-phospho-L-serine + 2-oxoglutarate = 3-phosphooxypyruvate + L-glutamate. It catalyses the reaction 4-(phosphooxy)-L-threonine + 2-oxoglutarate = (R)-3-hydroxy-2-oxo-4-phosphooxybutanoate + L-glutamate. It participates in amino-acid biosynthesis; L-serine biosynthesis; L-serine from 3-phospho-D-glycerate: step 2/3. It functions in the pathway cofactor biosynthesis; pyridoxine 5'-phosphate biosynthesis; pyridoxine 5'-phosphate from D-erythrose 4-phosphate: step 3/5. Functionally, catalyzes the reversible conversion of 3-phosphohydroxypyruvate to phosphoserine and of 3-hydroxy-2-oxo-4-phosphonooxybutanoate to phosphohydroxythreonine. This Ralstonia pickettii (strain 12J) protein is Phosphoserine aminotransferase.